A 624-amino-acid polypeptide reads, in one-letter code: Bifunctional 3'-phosphoadenosine 5'-phosphosulfate synthase 1 (624 aa).

At Met-1 the chain carries N-acetylmethionine. The adenylyl-sulfate kinase stretch occupies residues 1 to 225; that stretch reads MEIPGSLCKK…VVELLQERDI (225 aa). The residue at position 12 (Lys-12) is an N6-acetyllysine. 62-67 provides a ligand contact to ATP; the sequence is GAGKTT. Adenosine 5'-phosphosulfate-binding positions include 89-92, Phe-101, 106-109, 132-133, Lys-171, and 184-185; these read DNIR, REEN, IS, and GF. Residues Cys-207, Cys-212, 419-422, 521-525, and Ala-563 each bind ATP; these read QLRN and GRDPA. Residues 234-624 are sulfate adenylyltransferase; it reads VKELYVPENK…VEYYKSLEKA (391 aa).

The protein in the N-terminal section; belongs to the APS kinase family. In the C-terminal section; belongs to the sulfate adenylyltransferase family. As to quaternary structure, homodimer. Expressed in the neonatal brain and in cartilage.

It catalyses the reaction sulfate + ATP + H(+) = adenosine 5'-phosphosulfate + diphosphate. The catalysed reaction is adenosine 5'-phosphosulfate + ATP = 3'-phosphoadenylyl sulfate + ADP + H(+). It functions in the pathway sulfur metabolism; sulfate assimilation. In terms of biological role, bifunctional enzyme with both ATP sulfurylase and APS kinase activity, which mediates two steps in the sulfate activation pathway. The first step is the transfer of a sulfate group to ATP to yield adenosine 5'-phosphosulfate (APS), and the second step is the transfer of a phosphate group from ATP to APS yielding 3'-phosphoadenylylsulfate (PAPS: activated sulfate donor used by sulfotransferase). In mammals, PAPS is the sole source of sulfate; APS appears to be only an intermediate in the sulfate-activation pathway. Required for normal biosynthesis of sulfated L-selectin ligands in endothelial cells. This Mus musculus (Mouse) protein is Bifunctional 3'-phosphoadenosine 5'-phosphosulfate synthase 1 (Papss1).